Reading from the N-terminus, the 346-residue chain is Peroxidase 9 (346 aa).

Positions 1-23 (MAISKLIPTLVLFVLFSFDVSVA) are cleaved as a signal peptide. 4 disulfide bridges follow: Cys54–Cys134, Cys87–Cys92, Cys140–Cys342, and Cys219–Cys251. Residue His85 is the Proton acceptor of the active site. Positions 86, 89, 91, 93, and 95 each coordinate Ca(2+). Pro182 contributes to the substrate binding site. N-linked (GlcNAc...) asparagine glycosylation occurs at Asn185. Position 212 (His212) interacts with heme b. Thr213 contacts Ca(2+). The Ca(2+) site is built by Asp264, Ser267, and Asp272.

It belongs to the peroxidase family. Classical plant (class III) peroxidase subfamily. Requires heme b as cofactor. It depends on Ca(2+) as a cofactor.

The protein resides in the secreted. The enzyme catalyses 2 a phenolic donor + H2O2 = 2 a phenolic radical donor + 2 H2O. Functionally, removal of H(2)O(2), oxidation of toxic reductants, biosynthesis and degradation of lignin, suberization, auxin catabolism, response to environmental stresses such as wounding, pathogen attack and oxidative stress. These functions might be dependent on each isozyme/isoform in each plant tissue. This Arabidopsis thaliana (Mouse-ear cress) protein is Peroxidase 9 (PER9).